A 394-amino-acid chain; its full sequence is Flavohemoprotein (394 aa).

The Globin domain maps to 1–138 (MLTQEHINII…LAQVFIDREG (138 aa)). H85 contacts heme b. Residues Y95 and E137 each act as charge relay system in the active site. Positions 149 to 394 (GGWRDGRTFV…VFGPHAQLAA (246 aa)) are reductase. The FAD-binding FR-type domain occupies 152-262 (RDGRTFVVRE…YAPAGDFFYV (111 aa)). FAD-binding positions include Y190 and 206–209 (RQYS). 274–279 (GVGATP) lines the NADP(+) pocket. 385–388 (VFGP) contributes to the FAD binding site.

This sequence belongs to the globin family. Two-domain flavohemoproteins subfamily. In the C-terminal section; belongs to the flavoprotein pyridine nucleotide cytochrome reductase family. Heme b is required as a cofactor. It depends on FAD as a cofactor.

It catalyses the reaction 2 nitric oxide + NADPH + 2 O2 = 2 nitrate + NADP(+) + H(+). The catalysed reaction is 2 nitric oxide + NADH + 2 O2 = 2 nitrate + NAD(+) + H(+). In terms of biological role, is involved in NO detoxification in an aerobic process, termed nitric oxide dioxygenase (NOD) reaction that utilizes O(2) and NAD(P)H to convert NO to nitrate, which protects the bacterium from various noxious nitrogen compounds. Therefore, plays a central role in the inducible response to nitrosative stress. The protein is Flavohemoprotein (hmp) of Vibrio cholerae serotype O1 (strain ATCC 39315 / El Tor Inaba N16961).